A 407-amino-acid polypeptide reads, in one-letter code: 1-deoxy-D-xylulose 5-phosphate reductoisomerase (407 aa).

The NADPH site is built by threonine 25, glycine 26, serine 27, isoleucine 28, asparagine 53, and asparagine 136. Lysine 137 provides a ligand contact to 1-deoxy-D-xylulose 5-phosphate. Glutamate 138 contacts NADPH. Mn(2+) is bound at residue aspartate 162. 1-deoxy-D-xylulose 5-phosphate is bound by residues serine 163, glutamate 164, serine 188, and histidine 211. Residue glutamate 164 participates in Mn(2+) binding. Residue glycine 217 coordinates NADPH. 1-deoxy-D-xylulose 5-phosphate is bound by residues serine 224, asparagine 229, lysine 230, and glutamate 233. Residue glutamate 233 coordinates Mn(2+).

This sequence belongs to the DXR family. Mg(2+) serves as cofactor. Mn(2+) is required as a cofactor.

It catalyses the reaction 2-C-methyl-D-erythritol 4-phosphate + NADP(+) = 1-deoxy-D-xylulose 5-phosphate + NADPH + H(+). It functions in the pathway isoprenoid biosynthesis; isopentenyl diphosphate biosynthesis via DXP pathway; isopentenyl diphosphate from 1-deoxy-D-xylulose 5-phosphate: step 1/6. Catalyzes the NADPH-dependent rearrangement and reduction of 1-deoxy-D-xylulose-5-phosphate (DXP) to 2-C-methyl-D-erythritol 4-phosphate (MEP). The polypeptide is 1-deoxy-D-xylulose 5-phosphate reductoisomerase (Afipia carboxidovorans (strain ATCC 49405 / DSM 1227 / KCTC 32145 / OM5) (Oligotropha carboxidovorans)).